Consider the following 319-residue polypeptide: Putative olfactory receptor 52L2 (319 aa).

At 1-43 the chain is on the extracellular side; sequence MNLDSFFSFLLKSLIMALSNSSWRLPQPSFFLVGIPGLEESQH. N-linked (GlcNAc...) asparagine glycosylation is present at asparagine 20. Residues 44-64 form a helical membrane-spanning segment; the sequence is WIALPLGILYLLALVGNVTIL. Topologically, residues 65–72 are cytoplasmic; sequence FIIWMDPS. The chain crosses the membrane as a helical span at residues 73 to 93; that stretch reads LHQSMYLFLSMLAAIDLVVAS. Topologically, residues 94 to 117 are extracellular; it reads STAPKALAVLLVRAQEIGYTVCLI. Cysteine 115 and cysteine 207 form a disulfide bridge. A helical membrane pass occupies residues 118–138; that stretch reads QMFFTHAFSSMESGVLVAMAL. Residues 139 to 157 lie on the Cytoplasmic side of the membrane; sequence DRYVAICHPLHHSTILHPG. Residues 158 to 178 form a helical membrane-spanning segment; the sequence is VIGHIGMVVLVRGLLLLIPFL. Residues 179-214 are Extracellular-facing; the sequence is ILLRKLIFCQATIIGHAYCEHMAVVKLACSETTVNR. Residues 215–235 form a helical membrane-spanning segment; that stretch reads AYGLTVALLVVGLDVLAIGVS. Topologically, residues 236–255 are cytoplasmic; the sequence is YAHILQAVLKVPGNEARLKA. A helical membrane pass occupies residues 256 to 276; that stretch reads FSTCGSHVCVILVFYIPGMFS. At 277-291 the chain is on the extracellular side; that stretch reads FLTHRFGHHVPHHVH. The helical transmembrane segment at 292 to 312 threads the bilayer; the sequence is VLLAILYRLVPPALNPLVYRV. At 313-319 the chain is on the cytoplasmic side; the sequence is KTQKIHQ.

The protein belongs to the G-protein coupled receptor 1 family.

It localises to the cell membrane. Its function is as follows. Odorant receptor. The protein is Putative olfactory receptor 52L2 (OR52L2P) of Homo sapiens (Human).